Consider the following 840-residue polypeptide: Lon protease homolog 2, peroxisomal (840 aa).

The Lon N-terminal domain occupies 13 to 222 (LPLLCTHDGV…KALPLLTRQI (210 aa)). Position 375–382 (375–382 (GPPGVGKT)) interacts with ATP. Residues 583–606 (QKVSRSEAPTEQHAEQNTDSKVED) form a disordered region. Over residues 584-606 (KVSRSEAPTEQHAEQNTDSKVED) the composition is skewed to basic and acidic residues. The region spanning 641-825 (LTLPGVAIGL…DEVLNAAFDG (185 aa)) is the Lon proteolytic domain. Active-site residues include serine 731 and lysine 774. The Microbody targeting signal motif lies at 838–840 (SKL).

The protein belongs to the peptidase S16 family.

It is found in the peroxisome matrix. It carries out the reaction Hydrolysis of proteins in presence of ATP.. Its function is as follows. ATP-dependent serine protease that mediates the selective degradation of misfolded and unassembled polypeptides in the peroxisomal matrix. Necessary for type 2 peroxisome targeting signal (PTS2)-containing protein processing and facilitates peroxisome matrix protein import. The sequence is that of Lon protease homolog 2, peroxisomal (lonp2) from Danio rerio (Zebrafish).